The chain runs to 524 residues: M phase phosphoprotein 10 (524 aa).

Positions 85–92 (VKRFAKNP) match the Nuclear localization signal 1 motif. 2 disordered regions span residues 100–243 (KLAL…KLGK) and 259–283 (KLKD…STHE). Residues 109 to 168 (DDIDEMDMDGFDSDDVDDEDKEIESNDSEGEDEEEEEEDEEEEEEEEEEEEEEKDGDNEG) show a composition bias toward acidic residues. Residues 131 to 165 (IESNDSEGEDEEEEEEDEEEEEEEEEEEEEEKDGD) are a coiled coil. Basic and acidic residues predominate over residues 169 to 180 (IEDKFFKIKELE). The segment covering 181-191 (EFLEEGEAEEY) has biased composition (acidic residues). A compositionally biased stretch (basic residues) spans 196-207 (KNKKGVAQRKKQ). The segment covering 210-238 (SDDEDEEDDDDEEEDVEFDAFAGGDDEET) has biased composition (acidic residues). A coiled-coil region spans residues 257 to 302 (KMKLKDLSEDEEAEIENKGNEKLSTHERARLKLQSKIEQMEKANLD). Positions 271–283 (IENKGNEKLSTHE) are enriched in basic and acidic residues. Residues 373–380 (GKREAKEL) carry the Nuclear localization signal 2 motif. A disordered region spans residues 479–524 (KGDIKDESELTQEDRKRRRANKKRKFKAESANEPPKKALDTSTKNP). The segment covering 480 to 493 (GDIKDESELTQEDR) has biased composition (basic and acidic residues). Positions 494–504 (KRRRANKKRKF) are enriched in basic residues. A compositionally biased stretch (basic and acidic residues) spans 505–517 (KAESANEPPKKAL).

The protein belongs to the MPP10 family. Component of the ribosomal small subunit (SSU) processome. Interacts with THAL in the nucleus.

It localises to the nucleus. The protein localises to the nucleolus. Involved in nucleolar processing of pre-18S ribosomal RNA. The polypeptide is M phase phosphoprotein 10 (Arabidopsis thaliana (Mouse-ear cress)).